Reading from the N-terminus, the 277-residue chain is Bifunctional protein FolD (277 aa).

NADP(+) is bound by residues Gly164–Ser166, Ser189, and Thr230.

This sequence belongs to the tetrahydrofolate dehydrogenase/cyclohydrolase family. As to quaternary structure, homodimer.

It catalyses the reaction (6R)-5,10-methylene-5,6,7,8-tetrahydrofolate + NADP(+) = (6R)-5,10-methenyltetrahydrofolate + NADPH. The catalysed reaction is (6R)-5,10-methenyltetrahydrofolate + H2O = (6R)-10-formyltetrahydrofolate + H(+). It functions in the pathway one-carbon metabolism; tetrahydrofolate interconversion. In terms of biological role, catalyzes the oxidation of 5,10-methylenetetrahydrofolate to 5,10-methenyltetrahydrofolate and then the hydrolysis of 5,10-methenyltetrahydrofolate to 10-formyltetrahydrofolate. In Clostridium perfringens (strain 13 / Type A), this protein is Bifunctional protein FolD.